Reading from the N-terminus, the 475-residue chain is uncharacterized protein (475 aa).

The tract at residues 42 to 292 (NLQNSLTGKT…NTRKGQRHNN (251 aa)) is disordered. Basic and acidic residues-rich tracts occupy residues 59–72 (EANHTSSDKSKSED) and 119–134 (IAEKQVEDRKLSDDSQ). Composition is skewed to polar residues over residues 150–159 (ITPNFTHTPI) and 220–242 (NNTFGSQTVSSANGKEVPQTSED). The segment covering 243–263 (SSSQAPHHSSSSGHAPSQQGG) has biased composition (low complexity). Basic residues predominate over residues 277-289 (FHHKGRNTRKGQR). In terms of domain architecture, HTH La-type RNA-binding spans 319–408 (NPYLCDVQAF…MSIKVRRKET (90 aa)). Phosphothreonine is present on Thr408. A Phosphoserine modification is found at Ser410.

It localises to the cytoplasm. This is an uncharacterized protein from Schizosaccharomyces pombe (strain 972 / ATCC 24843) (Fission yeast).